The chain runs to 405 residues: Tryptophan synthase beta chain (405 aa).

Lysine 98 is subject to N6-(pyridoxal phosphate)lysine.

Belongs to the TrpB family. Tetramer of two alpha and two beta chains. Pyridoxal 5'-phosphate serves as cofactor.

It catalyses the reaction (1S,2R)-1-C-(indol-3-yl)glycerol 3-phosphate + L-serine = D-glyceraldehyde 3-phosphate + L-tryptophan + H2O. Its pathway is amino-acid biosynthesis; L-tryptophan biosynthesis; L-tryptophan from chorismate: step 5/5. Functionally, the beta subunit is responsible for the synthesis of L-tryptophan from indole and L-serine. This chain is Tryptophan synthase beta chain, found in Methylococcus capsulatus (strain ATCC 33009 / NCIMB 11132 / Bath).